The sequence spans 1093 residues: Protein AF-17 (1093 aa).

Residues 5 to 57 (VGGCCVCSDERGWAENPLVYCDGHACSVAVHQACYGIVQVPTGPWFCRKCESQ) form a PHD-type 1 zinc finger. A C2HC pre-PHD-type zinc finger spans residues 62 to 95 (RVRCELCPHKDGALKRTDNGGWAHVVCALYIPEV). A PHD-type 2 zinc finger spans residues 118–181 (KTCYICEEQG…KYCGYCKYHF (64 aa)). A disordered region spans residues 185-500 (KTSRHSSGGG…GGPAAPSLPS (316 aa)). A compositionally biased stretch (gly residues) spans 191-212 (SGGGGGGAGGGGGSMGGGGSGF). Positions 231–255 (PTHHERGQKKSRKDKERLKQKHKKR) are enriched in basic residues. A Phosphoserine modification is found at Ser258. Pro residues predominate over residues 258–268 (SPPSILTPPVV). Residues 282–300 (SHHEASTQETSESSRESKG) are compositionally biased toward basic and acidic residues. A compositionally biased stretch (basic residues) spans 301-316 (KKSSSHSLSHKGKKLS). Residues 317–340 (SGKGVSSFTSASSSSSSSSSSSGG) show a composition bias toward low complexity. The segment covering 345 to 354 (AVSSLQSSPD) has biased composition (polar residues). Residues 374-388 (APAPSAPPSPSAPEP) show a composition bias toward pro residues. Residues Ser378 and Ser423 each carry the phosphoserine modification. Residues 410-425 (STTTSSSGRARAPSPG) show a composition bias toward low complexity. A Phosphothreonine modification is found at Thr451. A compositionally biased stretch (basic residues) spans 465–484 (EKKHKASKRSRHGPGRPKGS). Positions 729 to 764 (LQKENQRLQEQILSLTAKKERLQILNVQLSVPFPAL) are leucine-zipper. 2 disordered regions span residues 775–871 (VPGP…RAPG) and 1060–1093 (QTNP…QEKG). A compositionally biased stretch (low complexity) spans 787–796 (SSDSLSTSKS). Polar residues predominate over residues 804 to 813 (GLDNSLSTSS). Composition is skewed to low complexity over residues 818 to 832 (SGCP…SFHS) and 839 to 853 (LLQQ…ALPG).

In terms of assembly, interacts with histone H3; interaction is necessary for MLLT6 binding to nucleosomes; interaction is inhibited by histone H3 'Lys-27' methylations (H3K27me1, H3K27me2 and H3K27me3).

The protein localises to the nucleus. This Homo sapiens (Human) protein is Protein AF-17 (MLLT6).